A 365-amino-acid chain; its full sequence is Histidine biosynthesis bifunctional protein HisB (365 aa).

The histidinol-phosphatase stretch occupies residues 1-176 (MTQQPTLFID…VADPKGLGQP (176 aa)). The Nucleophile role is filled by Asp10. The Mg(2+) site is built by Asp10 and Asp12. Asp12 functions as the Proton donor in the catalytic mechanism. Zn(2+) contacts are provided by Cys93, His95, Cys101, and Cys103. Mg(2+) is bound at residue Asp130. Residues 177-365 (RHAVVARKTK…NEMPSSKGVL (189 aa)) form an imidazoleglycerol-phosphate dehydratase region.

The protein in the N-terminal section; belongs to the histidinol-phosphatase family. It in the C-terminal section; belongs to the imidazoleglycerol-phosphate dehydratase family. Requires Mg(2+) as cofactor. It depends on Zn(2+) as a cofactor.

The protein localises to the cytoplasm. The enzyme catalyses D-erythro-1-(imidazol-4-yl)glycerol 3-phosphate = 3-(imidazol-4-yl)-2-oxopropyl phosphate + H2O. The catalysed reaction is L-histidinol phosphate + H2O = L-histidinol + phosphate. Its pathway is amino-acid biosynthesis; L-histidine biosynthesis; L-histidine from 5-phospho-alpha-D-ribose 1-diphosphate: step 6/9. The protein operates within amino-acid biosynthesis; L-histidine biosynthesis; L-histidine from 5-phospho-alpha-D-ribose 1-diphosphate: step 8/9. This is Histidine biosynthesis bifunctional protein HisB from Mannheimia succiniciproducens (strain KCTC 0769BP / MBEL55E).